Consider the following 350-residue polypeptide: Protein O-mannose kinase (350 aa).

Met1 carries the N-acetylmethionine modification. The Cytoplasmic portion of the chain corresponds to 1–20 (MEKQPQNKRRGLAPREVPPA). The chain crosses the membrane as a helical; Signal-anchor for type II membrane protein span at residues 21 to 43 (VGLLLIMALMNTLLYLCLDHFFI). Residues 44 to 350 (APRQSIVDPR…AVMSQAREML (307 aa)) lie on the Lumenal side of the membrane. Positions 81-350 (VRQLKRVGEG…AVMSQAREML (270 aa)) constitute a Protein kinase domain. Asn165, Asn220, and Asn235 each carry an N-linked (GlcNAc...) asparagine glycan.

Belongs to the protein kinase superfamily. Ser/Thr protein kinase family. STKL subfamily.

The protein localises to the endoplasmic reticulum membrane. It carries out the reaction 3-O-[beta-D-GalNAc-(1-&gt;3)-beta-D-GlcNAc-(1-&gt;4)-alpha-D-Man]-L-Thr-[protein] + ATP = 3-O-[beta-D-GalNAc-(1-&gt;3)-beta-D-GlcNAc-(1-&gt;4)-(O-6-P-alpha-D-Man)]-Thr-[protein] + ADP + H(+). Its function is as follows. Protein O-mannose kinase that specifically mediates phosphorylation at the 6-position of an O-mannose of the trisaccharide (N-acetylgalactosamine (GalNAc)-beta-1,3-N-acetylglucosamine (GlcNAc)-beta-1,4-mannose) to generate phosphorylated O-mannosyl trisaccharide (N-acetylgalactosamine-beta-1,3-N-acetylglucosamine-beta-1,4-(phosphate-6-)mannose). Phosphorylated O-mannosyl trisaccharide is a carbohydrate structure present in alpha-dystroglycan (DAG1), which is required for binding laminin G-like domain-containing extracellular proteins with high affinity. Only shows kinase activity when the GalNAc-beta-3-GlcNAc-beta-terminus is linked to the 4-position of O-mannose, suggesting that this disaccharide serves as the substrate recognition motif. This Macaca fascicularis (Crab-eating macaque) protein is Protein O-mannose kinase (POMK).